Reading from the N-terminus, the 369-residue chain is Phenylalanine--tRNA ligase alpha subunit (369 aa).

Mg(2+) is bound at residue E272.

It belongs to the class-II aminoacyl-tRNA synthetase family. Phe-tRNA synthetase alpha subunit type 1 subfamily. In terms of assembly, tetramer of two alpha and two beta subunits. The cofactor is Mg(2+).

The protein resides in the cytoplasm. It catalyses the reaction tRNA(Phe) + L-phenylalanine + ATP = L-phenylalanyl-tRNA(Phe) + AMP + diphosphate + H(+). The chain is Phenylalanine--tRNA ligase alpha subunit from Cutibacterium acnes (strain DSM 16379 / KPA171202) (Propionibacterium acnes).